Reading from the N-terminus, the 422-residue chain is MVMAALSLVAACWGRAAADESVQLPAAPGSSVRARETMVSVTMATSEWIQFFKEAGIPPGPAVNYAVMFVDNRIQKSMLLDLNKEIMNELGVTVVGDIIAILKHAKVVHRQDMCKAATESVPCSPSPLAGEIRRGTSAASRMITNSLNHDSPPSTPPRRPDTSTSKISVTVSNKMAAKSAKATAALARREEESLAVPAKRRRVTAEMEGKYVINMPKGTTPRTRKILEQQQAAKGLHRTSVFDRLGAETKADTTTGSKPTGVFSRLGATPETDEDLAWDSDNDSSSSVLQYAGVLKKLGRGPAKASPQPALTVKAKATSSATTAAAPTLRRLALSSRSGLERKPESLSKVSIIKRLGAAALVPEAQDSQVTSTKSKSSAEVKVTIKRTLVGPRGSSSSEGLGAQMDHAGTVSVFKRLGRRTF.

A phosphoserine mark is found at serine 124, serine 126, and serine 151. The disordered stretch occupies residues 144-166 (TNSLNHDSPPSTPPRRPDTSTSK). Residue lysine 250 forms a Glycyl lysine isopeptide (Lys-Gly) (interchain with G-Cter in SUMO2) linkage. Disordered regions lie at residues 251 to 285 (ADTTTGSKPTGVFSRLGATPETDEDLAWDSDNDSS) and 299 to 324 (GRGPAKASPQPALTVKAKATSSATTA). Residues 271 to 282 (ETDEDLAWDSDN) are compositionally biased toward acidic residues. Phosphoserine is present on residues serine 280 and serine 306. Low complexity predominate over residues 310–324 (ALTVKAKATSSATTA). Residue serine 351 is modified to Phosphoserine.

This is an uncharacterized protein from Homo sapiens (Human).